We begin with the raw amino-acid sequence, 61 residues long: Photosystem II reaction center protein K (61 aa).

Residues 1 to 24 (MLNIFSLICICLNSALHSSSFFFA) constitute a propeptide that is removed on maturation. A helical transmembrane segment spans residues 32-52 (FFNPIVDFMPVIPVLFFLLAL).

The protein belongs to the PsbK family. As to quaternary structure, PSII is composed of 1 copy each of membrane proteins PsbA, PsbB, PsbC, PsbD, PsbE, PsbF, PsbH, PsbI, PsbJ, PsbK, PsbL, PsbM, PsbT, PsbX, PsbY, PsbZ, Psb30/Ycf12, at least 3 peripheral proteins of the oxygen-evolving complex and a large number of cofactors. It forms dimeric complexes.

It is found in the plastid. Its subcellular location is the chloroplast thylakoid membrane. Its function is as follows. One of the components of the core complex of photosystem II (PSII). PSII is a light-driven water:plastoquinone oxidoreductase that uses light energy to abstract electrons from H(2)O, generating O(2) and a proton gradient subsequently used for ATP formation. It consists of a core antenna complex that captures photons, and an electron transfer chain that converts photonic excitation into a charge separation. The polypeptide is Photosystem II reaction center protein K (Drimys granadensis).